We begin with the raw amino-acid sequence, 348 residues long: Protein RecA (348 aa).

65-72 lines the ATP pocket; sequence GPESSGKT. The tract at residues 326–348 is disordered; that stretch reads QMGSESLSSSSDDDDIKEESGEE. A compositionally biased stretch (acidic residues) spans 336-348; the sequence is SDDDDIKEESGEE.

The protein belongs to the RecA family.

The protein localises to the cytoplasm. Its function is as follows. Can catalyze the hydrolysis of ATP in the presence of single-stranded DNA, the ATP-dependent uptake of single-stranded DNA by duplex DNA, and the ATP-dependent hybridization of homologous single-stranded DNAs. It interacts with LexA causing its activation and leading to its autocatalytic cleavage. This Campylobacter hominis (strain ATCC BAA-381 / DSM 21671 / CCUG 45161 / LMG 19568 / NCTC 13146 / CH001A) protein is Protein RecA.